Consider the following 554-residue polypeptide: Glucose-6-phosphate isomerase (554 aa).

E359 serves as the catalytic Proton donor. Residues H390 and K518 contribute to the active site.

Belongs to the GPI family.

The protein localises to the cytoplasm. The catalysed reaction is alpha-D-glucose 6-phosphate = beta-D-fructose 6-phosphate. The protein operates within carbohydrate biosynthesis; gluconeogenesis. It participates in carbohydrate degradation; glycolysis; D-glyceraldehyde 3-phosphate and glycerone phosphate from D-glucose: step 2/4. Catalyzes the reversible isomerization of glucose-6-phosphate to fructose-6-phosphate. The protein is Glucose-6-phosphate isomerase of Pseudomonas fluorescens (strain ATCC BAA-477 / NRRL B-23932 / Pf-5).